Here is a 686-residue protein sequence, read N- to C-terminus: Catalase-2 (686 aa).

Over residues 1–27 (MSDDQNKRVNEHSKDEQLEQYRTDNSG) the composition is skewed to basic and acidic residues. Residues 1 to 43 (MSDDQNKRVNEHSKDEQLEQYRTDNSGKKMTTNQGLRVSEDEH) form a disordered region. Catalysis depends on residues histidine 78 and asparagine 151. Tyrosine 365 contacts heme.

The protein belongs to the catalase family. HPII subfamily. Heme is required as a cofactor.

It catalyses the reaction 2 H2O2 = O2 + 2 H2O. In terms of biological role, decomposes hydrogen peroxide into water and oxygen; serves to protect cells from the toxic effects of hydrogen peroxide. Involved in sporulation. This chain is Catalase-2 (katE), found in Bacillus subtilis (strain 168).